The chain runs to 369 residues: Aminomethyltransferase (369 aa).

It belongs to the GcvT family. The glycine cleavage system is composed of four proteins: P, T, L and H.

It catalyses the reaction N(6)-[(R)-S(8)-aminomethyldihydrolipoyl]-L-lysyl-[protein] + (6S)-5,6,7,8-tetrahydrofolate = N(6)-[(R)-dihydrolipoyl]-L-lysyl-[protein] + (6R)-5,10-methylene-5,6,7,8-tetrahydrofolate + NH4(+). Its function is as follows. The glycine cleavage system catalyzes the degradation of glycine. The sequence is that of Aminomethyltransferase from Xanthomonas campestris pv. campestris (strain 8004).